The primary structure comprises 423 residues: Serine--tRNA ligase (423 aa).

231–233 (TGE) serves as a coordination point for L-serine. Residue 262–264 (RQE) participates in ATP binding. Position 285 (E285) interacts with L-serine. 349–352 (EISS) contacts ATP. L-serine is bound at residue S385.

The protein belongs to the class-II aminoacyl-tRNA synthetase family. Type-1 seryl-tRNA synthetase subfamily. As to quaternary structure, homodimer. The tRNA molecule binds across the dimer.

It is found in the cytoplasm. The enzyme catalyses tRNA(Ser) + L-serine + ATP = L-seryl-tRNA(Ser) + AMP + diphosphate + H(+). The catalysed reaction is tRNA(Sec) + L-serine + ATP = L-seryl-tRNA(Sec) + AMP + diphosphate + H(+). It participates in aminoacyl-tRNA biosynthesis; selenocysteinyl-tRNA(Sec) biosynthesis; L-seryl-tRNA(Sec) from L-serine and tRNA(Sec): step 1/1. Catalyzes the attachment of serine to tRNA(Ser). Is also able to aminoacylate tRNA(Sec) with serine, to form the misacylated tRNA L-seryl-tRNA(Sec), which will be further converted into selenocysteinyl-tRNA(Sec). This chain is Serine--tRNA ligase, found in Phytoplasma mali (strain AT).